A 101-amino-acid chain; its full sequence is Urease subunit beta (101 aa).

This sequence belongs to the urease beta subunit family. As to quaternary structure, heterotrimer of UreA (gamma), UreB (beta) and UreC (alpha) subunits. Three heterotrimers associate to form the active enzyme.

It is found in the cytoplasm. It carries out the reaction urea + 2 H2O + H(+) = hydrogencarbonate + 2 NH4(+). Its pathway is nitrogen metabolism; urea degradation; CO(2) and NH(3) from urea (urease route): step 1/1. The polypeptide is Urease subunit beta (Polaromonas naphthalenivorans (strain CJ2)).